The following is a 138-amino-acid chain: NADH dehydrogenase [ubiquinone] iron-sulfur protein 2, mitochondrial (138 aa).

It belongs to the complex I 49 kDa subunit family. As to quaternary structure, core subunit of respiratory chain NADH dehydrogenase (Complex I) which is composed of 45 different subunits. Component of the iron-sulfur (IP) fragment of the enzyme. Interacts with NDUFAF3. Interacts with NDUFAF7. Interacts with CERS2. [4Fe-4S] cluster is required as a cofactor. In terms of processing, dimethylation at Arg-118 by NDUFAF7 takes place after NDUFS2 assembles into the complex I, leading to stabilize the early intermediate complex.

It is found in the mitochondrion inner membrane. The catalysed reaction is a ubiquinone + NADH + 5 H(+)(in) = a ubiquinol + NAD(+) + 4 H(+)(out). Functionally, core subunit of the mitochondrial membrane respiratory chain NADH dehydrogenase (Complex I) which catalyzes electron transfer from NADH through the respiratory chain, using ubiquinone as an electron acceptor. Essential for the catalytic activity and assembly of complex I. Redox-sensitive, critical component of the oxygen-sensing pathway in the pulmonary vasculature which plays a key role in acute pulmonary oxygen-sensing and hypoxic pulmonary vasoconstriction. Plays an important role in carotid body sensing of hypoxia. Essential for glia-like neural stem and progenitor cell proliferation, differentiation and subsequent oligodendrocyte or neuronal maturation. This chain is NADH dehydrogenase [ubiquinone] iron-sulfur protein 2, mitochondrial, found in Mesocricetus auratus (Golden hamster).